Here is a 238-residue protein sequence, read N- to C-terminus: uncharacterized protein (238 aa).

This is an uncharacterized protein from Ictaluridae (bullhead catfishes).